An 89-amino-acid chain; its full sequence is Cell division topological specificity factor (89 aa).

It belongs to the MinE family.

In terms of biological role, prevents the cell division inhibition by proteins MinC and MinD at internal division sites while permitting inhibition at polar sites. This ensures cell division at the proper site by restricting the formation of a division septum at the midpoint of the long axis of the cell. The protein is Cell division topological specificity factor of Brucella anthropi (strain ATCC 49188 / DSM 6882 / CCUG 24695 / JCM 21032 / LMG 3331 / NBRC 15819 / NCTC 12168 / Alc 37) (Ochrobactrum anthropi).